We begin with the raw amino-acid sequence, 384 residues long: Probable L-tyrosine/L-aspartate decarboxylase (384 aa).

Lys-233 is modified (N6-(pyridoxal phosphate)lysine).

It belongs to the group II decarboxylase family. MfnA subfamily. Pyridoxal 5'-phosphate is required as a cofactor.

The catalysed reaction is L-tyrosine + H(+) = tyramine + CO2. It carries out the reaction L-aspartate + H(+) = beta-alanine + CO2. It functions in the pathway cofactor biosynthesis; methanofuran biosynthesis. Its pathway is cofactor biosynthesis; coenzyme A biosynthesis. Its function is as follows. Catalyzes the decarboxylation of L-tyrosine to produce tyramine for methanofuran biosynthesis. Can also catalyze the decarboxylation of L-aspartate to produce beta-alanine for coenzyme A (CoA) biosynthesis. This Methanococcus maripaludis (strain DSM 14266 / JCM 13030 / NBRC 101832 / S2 / LL) protein is Probable L-tyrosine/L-aspartate decarboxylase.